Here is a 171-residue protein sequence, read N- to C-terminus: Homeobox protein engrailed-1-B (171 aa).

Disordered regions lie at residues 1-41 and 60-86; these read EDPG…NAAP and YSDR…KRPR. Low complexity predominate over residues 15 to 29; the sequence is PDSDTPSDSSKGSDS. The segment at residues 82 to 141 is a DNA-binding region (homeobox); it reads DKRPRTAFTAEQLQRLKAEFQANRYITEQRRQTLAQELSLNESQIKIWFQNKRAKIKKAS.

This sequence belongs to the engrailed homeobox family.

It localises to the nucleus. In terms of biological role, required for proper formation of the apical ectodermal ridge and correct dorsal-ventral patterning in the limb. This Xenopus laevis (African clawed frog) protein is Homeobox protein engrailed-1-B (en1-b).